Here is a 262-residue protein sequence, read N- to C-terminus: Tritrans,polycis-undecaprenyl-diphosphate synthase (geranylgeranyl-diphosphate specific) (262 aa).

Asp-40 is a catalytic residue. Asp-40 contributes to the Mg(2+) binding site. Substrate-binding positions include 41–44 (GNRR), Trp-45, and 85–87 (STE). Asn-88 serves as the catalytic Proton acceptor. Residues Arg-92, Arg-211, and 217-219 (RIS) contribute to the substrate site. A Mg(2+)-binding site is contributed by Glu-230.

Belongs to the UPP synthase family. As to quaternary structure, homodimer. It depends on Mg(2+) as a cofactor.

The catalysed reaction is geranylgeranyl diphosphate + 7 isopentenyl diphosphate = tri-trans,hepta-cis-undecaprenyl diphosphate + 7 diphosphate. In terms of biological role, catalyzes the sequential condensation of isopentenyl diphosphate (IPP) with geranylgeranyl diphosphate (GGPP) to yield (2Z,6Z,10Z,14Z,18Z,22Z,26Z,30E,34E,38E)-undecaprenyl diphosphate (tritrans,heptacis-UPP). It is probably the precursor of glycosyl carrier lipids. In Sulfurisphaera tokodaii (strain DSM 16993 / JCM 10545 / NBRC 100140 / 7) (Sulfolobus tokodaii), this protein is Tritrans,polycis-undecaprenyl-diphosphate synthase (geranylgeranyl-diphosphate specific).